The chain runs to 327 residues: Beta-1,4-galactosyltransferase 7 (327 aa).

Residues 1–30 (MLPSRRKAAQLPWEDGRARLLPGGLRRKCS) lie on the Cytoplasmic side of the membrane. Residues 31 to 51 (IFHLFIAFLLLVFFSLLWLQL) form a helical; Signal-anchor for type II membrane protein membrane-spanning segment. Residues 52–327 (SCSGDMAQVT…KTATPWCIFG (276 aa)) are Lumenal-facing. The interval 61-88 (TRGQGQETSGPPRACPPEPPPEHWEEDE) is disordered. UDP-alpha-D-galactose is bound by residues 100–104 (PFRER) and 139–141 (FNR). Asparagine 154 carries an N-linked (GlcNAc...) asparagine glycan. UDP-alpha-D-galactose is bound by residues 164-165 (VD), tyrosine 194, and tryptophan 224. Residue aspartate 165 participates in Mn(2+) binding. Residue 226–229 (REDD) participates in N-acetyl-D-glucosamine binding. Histidine 257 contributes to the Mn(2+) binding site. UDP-alpha-D-galactose-binding positions include 257–259 (HLH) and arginine 266.

The protein belongs to the glycosyltransferase 7 family. Mn(2+) is required as a cofactor.

The protein localises to the golgi apparatus. It is found in the golgi stack membrane. It carries out the reaction 3-O-(beta-D-xylosyl)-L-seryl-[protein] + UDP-alpha-D-galactose = 3-O-(beta-D-galactosyl-(1-&gt;4)-beta-D-xylosyl)-L-seryl-[protein] + UDP + H(+). It functions in the pathway protein modification; protein glycosylation. Its function is as follows. Required for the biosynthesis of the tetrasaccharide linkage region of proteoglycans, especially for small proteoglycans in skin fibroblasts. The polypeptide is Beta-1,4-galactosyltransferase 7 (B4galt7) (Mus musculus (Mouse)).